A 569-amino-acid polypeptide reads, in one-letter code: Phosphoglucomutase 2 (569 aa).

Residues 1–23 (MSFQIETVPTKPYEDQKPGTSGL) are disordered. Serine 2 is modified (N-acetylserine). Arginine 24 is a binding site for alpha-D-glucose 1,6-bisphosphate. Threonine 111 and threonine 117 each carry phosphothreonine. Residue serine 119 coordinates alpha-D-glucose 1,6-bisphosphate. Residue serine 119 is the Phosphoserine intermediate of the active site. 4 residues coordinate Mg(2+): serine 119, aspartate 290, aspartate 292, and aspartate 294. The residue at position 119 (serine 119) is a Phosphoserine. Alpha-D-glucose 1,6-bisphosphate is bound by residues aspartate 294, arginine 295, threonine 359, glutamate 378, serine 380, and lysine 391.

The protein belongs to the phosphohexose mutase family. In terms of assembly, monomer. Mg(2+) serves as cofactor. The cofactor is Zn(2+). O-glycosylated with mannose residues. Substrate of UDP-glucose--glycoprotein glucose phosphotransferase, linking glucose in a phosphodiester linkage to O-linked mannose.

The protein localises to the cytoplasm. The enzyme catalyses alpha-D-glucose 1-phosphate = alpha-D-glucose 6-phosphate. It carries out the reaction O-phospho-L-seryl-[protein] + alpha-D-glucose 1-phosphate = alpha-D-glucose 1,6-bisphosphate + L-seryl-[protein]. It catalyses the reaction alpha-D-glucose 1,6-bisphosphate + L-seryl-[protein] = O-phospho-L-seryl-[protein] + alpha-D-glucose 6-phosphate. In terms of biological role, major phosphoglucomutase isozyme that catalyzes the reversible isomerization of alpha-D-glucose 1-phosphate to alpha-D-glucose 6-phosphate. The mechanism proceeds via the intermediate compound alpha-D-glucose 1,6-bisphosphate. Constitutes about 80-90% of the phosphoglucomutase activity in the cell. Key enzyme in hexose metabolism. The forward reaction is an essential step in the energy metabolism of galactose since the product of the galactose pathway enzymes in yeast is glucose 1-phosphate. The reverse reaction is an essential step for biosynthesis when carbon sources other than galactose are the energy source because glucose 1-phosphate is the starting point for the synthesis of UDP-glucose, which acts as a precursor for the synthesis of oligosaccharides and trehalose. This chain is Phosphoglucomutase 2, found in Saccharomyces cerevisiae (strain ATCC 204508 / S288c) (Baker's yeast).